Here is a 353-residue protein sequence, read N- to C-terminus: UDP-N-acetylglucosamine--N-acetylmuramyl-(pentapeptide) pyrophosphoryl-undecaprenol N-acetylglucosamine transferase (353 aa).

Residues T15–G17, N125, R165, S186, and Q286 contribute to the UDP-N-acetyl-alpha-D-glucosamine site.

It belongs to the glycosyltransferase 28 family. MurG subfamily.

It is found in the cell inner membrane. The catalysed reaction is di-trans,octa-cis-undecaprenyl diphospho-N-acetyl-alpha-D-muramoyl-L-alanyl-D-glutamyl-meso-2,6-diaminopimeloyl-D-alanyl-D-alanine + UDP-N-acetyl-alpha-D-glucosamine = di-trans,octa-cis-undecaprenyl diphospho-[N-acetyl-alpha-D-glucosaminyl-(1-&gt;4)]-N-acetyl-alpha-D-muramoyl-L-alanyl-D-glutamyl-meso-2,6-diaminopimeloyl-D-alanyl-D-alanine + UDP + H(+). It participates in cell wall biogenesis; peptidoglycan biosynthesis. Its function is as follows. Cell wall formation. Catalyzes the transfer of a GlcNAc subunit on undecaprenyl-pyrophosphoryl-MurNAc-pentapeptide (lipid intermediate I) to form undecaprenyl-pyrophosphoryl-MurNAc-(pentapeptide)GlcNAc (lipid intermediate II). The polypeptide is UDP-N-acetylglucosamine--N-acetylmuramyl-(pentapeptide) pyrophosphoryl-undecaprenol N-acetylglucosamine transferase (Chlamydia muridarum (strain MoPn / Nigg)).